The sequence spans 402 residues: Phosphoglycerate kinase (402 aa).

Substrate-binding positions include D24–N26, R40, H63–R66, R122, and R155. Residues K206, G297, E328, and G358–S361 contribute to the ATP site.

This sequence belongs to the phosphoglycerate kinase family. In terms of assembly, monomer.

Its subcellular location is the cytoplasm. The enzyme catalyses (2R)-3-phosphoglycerate + ATP = (2R)-3-phospho-glyceroyl phosphate + ADP. Its pathway is carbohydrate degradation; glycolysis; pyruvate from D-glyceraldehyde 3-phosphate: step 2/5. This is Phosphoglycerate kinase from Prochlorococcus marinus (strain MIT 9312).